The chain runs to 417 residues: Serine hydroxymethyltransferase (417 aa).

(6S)-5,6,7,8-tetrahydrofolate-binding positions include Leu121 and 125-127 (GHL). Lys230 is subject to N6-(pyridoxal phosphate)lysine. A (6S)-5,6,7,8-tetrahydrofolate-binding site is contributed by 355–357 (SPF).

Belongs to the SHMT family. In terms of assembly, homodimer. Pyridoxal 5'-phosphate serves as cofactor.

It localises to the cytoplasm. It catalyses the reaction (6R)-5,10-methylene-5,6,7,8-tetrahydrofolate + glycine + H2O = (6S)-5,6,7,8-tetrahydrofolate + L-serine. It functions in the pathway one-carbon metabolism; tetrahydrofolate interconversion. The protein operates within amino-acid biosynthesis; glycine biosynthesis; glycine from L-serine: step 1/1. Its function is as follows. Catalyzes the reversible interconversion of serine and glycine with tetrahydrofolate (THF) serving as the one-carbon carrier. This reaction serves as the major source of one-carbon groups required for the biosynthesis of purines, thymidylate, methionine, and other important biomolecules. Also exhibits THF-independent aldolase activity toward beta-hydroxyamino acids, producing glycine and aldehydes, via a retro-aldol mechanism. This is Serine hydroxymethyltransferase from Legionella pneumophila (strain Lens).